The chain runs to 128 residues: Ferric uptake regulation protein homolog (128 aa).

It belongs to the Fur family.

The chain is Ferric uptake regulation protein homolog from Archaeoglobus fulgidus (strain ATCC 49558 / DSM 4304 / JCM 9628 / NBRC 100126 / VC-16).